The primary structure comprises 250 residues: MMPRMGPPAAARQDNPLHVSFRNPQWPPNFINKDNVLDYFCNQANAFYEMNSCNQQIRMQNIVNRTVEECLRTMPGIQYVLWYSQPPLFIICKQRRNNVTNVSPIAYYYVINGSVHQAPDMYSLVQSRLLGALEPLRNAFGEVTNYSRYNTAKGYYWEFKNKPNVKKREEEKKEDEEEKLEDRSTNFQKTRTMMLLNQLFSEMPAEDALEREEKEEVEEEEEETLKTEEPTTSTDEPKFAEPTARTTSKQ.

The segment at 166-250 (KKREEEKKED…EPTARTTSKQ (85 aa)) is disordered. Residues 204 to 223 (PAEDALEREEKEEVEEEEEE) are compositionally biased toward acidic residues. A compositionally biased stretch (basic and acidic residues) spans 224 to 239 (TLKTEEPTTSTDEPKF).

It belongs to the Mediator complex subunit 6 family. As to quaternary structure, component of the Mediator complex. Interacts with let-19/mdt-13. Interacts with RNA polymerase II. Interacts with mdt-28.

Its subcellular location is the nucleus. Component of the Mediator complex, a coactivator involved in the regulated transcription of nearly all RNA polymerase II-dependent genes. Mediator functions as a bridge to convey information from gene-specific regulatory proteins to the basal RNA polymerase II transcription machinery. Mediator is recruited to promoters by direct interactions with regulatory proteins and serves as a scaffold for the assembly of a functional preinitiation complex with RNA polymerase II and the general transcription factors. Acts to repress beta-catenin target genes. Required for asymmetric division of T-cells and for gonad and germ cell development. The sequence is that of Mediator of RNA polymerase II transcription subunit 6 (mdt-6) from Caenorhabditis elegans.